The sequence spans 418 residues: RapA guanosine triphosphatase-activating protein B (418 aa).

One can recognise a Rap-GAP domain in the interval 142–407 (LVKVCEPEFN…EKASALINVI (266 aa)). The disordered stretch occupies residues 304–339 (NRVVGEQPSPSLTTTTTTTTTTSPTINSNSPTPSNK). A compositionally biased stretch (low complexity) spans 311–338 (PSPSLTTTTTTTTTTSPTINSNSPTPSN).

Functionally, mediates the deactivation of rap1 during multicellular development and is required for normal morphogenesis. Also required for the correct patterning of specific subtypes of prestalk cells. The sequence is that of RapA guanosine triphosphatase-activating protein B (rapgapB) from Dictyostelium discoideum (Social amoeba).